The sequence spans 412 residues: Sexual development regulator umv3 (412 aa).

Positions M1–H197 are disordered. 2 stretches are compositionally biased toward polar residues: residues R73–S93 and R149–T170. Basic and acidic residues predominate over residues E171–R181. The 194-residue stretch at P195–R388 folds into the Velvet domain.

It belongs to the velvet family. VelC subfamily.

It localises to the nucleus. In terms of biological role, velvet-domain-containing protein not required for disease or sexual development on seedlings. This Mycosarcoma maydis (Corn smut fungus) protein is Sexual development regulator umv3.